Reading from the N-terminus, the 176-residue chain is uncharacterized protein (176 aa).

This is an uncharacterized protein from Schizosaccharomyces pombe (strain 972 / ATCC 24843) (Fission yeast).